Reading from the N-terminus, the 860-residue chain is SH2 domain-containing protein 3C (860 aa).

At S22 the chain carries Phosphoserine. Disordered regions lie at residues 51–117 and 130–180; these read EATQ…PPGL and PLED…PEAG. Basic and acidic residues predominate over residues 162–175; the sequence is ERPPRDVHSERAAG. The 100-residue stretch at 220-319 folds into the SH2 domain; sequence WYHGRIPREV…QSGAIIYCPV (100 aa). 2 positions are modified to phosphotyrosine: Y278 and Y283. The disordered stretch occupies residues 335-537; the sequence is GQGSSKPASP…LSENGAPEGD (203 aa). Phosphoserine is present on S359. Low complexity-rich tracts occupy residues 405–420, 427–443, and 479–490; these read SPMS…PAYS, AAPA…SPVA, and SPSPSLSSYSDP. Phosphoserine is present on S440. The Ras-GEF domain maps to 586–854; the sequence is DARTLARHVT…TALSHKLEPA (269 aa). Y793 is subject to Phosphotyrosine.

As to quaternary structure, component of a complex comprised of SH2D3C, BCAR1/CAS, and CRK. Within the complex, interacts with CRK and (via C-terminus) with BCAR1/CAS (via C-terminus). Interacts with NEDD9/HEF1. Interacts with EPHB2. In terms of assembly, interacts with NEDD9/HEF1. Interacts with BCAR1/CAS. Interacts with PTK2B. Interacts (via C-terminus) with BCAR1/CAS (via C-terminus). Interacts with IGF1. Phosphorylated by MAPK/ERK upon T-cell receptor stimulation in T-cells. Ubiquitously expressed.

It is found in the cytoplasm. The protein resides in the cell membrane. Its subcellular location is the cell projection. The protein localises to the axon. It localises to the ruffle membrane. Acts as an adapter protein that mediates cell signaling pathways involved in cellular functions such as cell adhesion and migration, tissue organization, and the regulation of the immune response. Plays a role in integrin-mediated cell adhesion through BCAR1-CRK-RAPGEF1 signaling and activation of the small GTPase RAP1. Promotes cell migration and invasion through the extracellular matrix. Required for marginal zone B-cell development and thymus-independent type 2 immune responses. Mediates migration and adhesion of B cells in the splenic marginal zone via promoting hyperphosphorylation of NEDD9/CASL. Plays a role in CXCL13-induced chemotaxis of B-cells. Plays a role in the migration of olfactory sensory neurons (OSNs) into the forebrain and the innervation of the olfactory bulb by the OSN axons during development. Required for the efficient tyrosine phosphorylation of BCAR1 in OSN axons. Its function is as follows. Important regulator of chemokine-induced, integrin-mediated T lymphocyte adhesion and migration, acting upstream of RAP1. Required for tissue-specific adhesion of T lymphocytes to peripheral tissues. Required for basal and CXCL2 stimulated serine-threonine phosphorylation of NEDD9. May be involved in the regulation of T-cell receptor-mediated IL2 production through the activation of the JNK pathway in T-cells. In terms of biological role, may be involved in the BCAR1/CAS-mediated JNK activation pathway. In Homo sapiens (Human), this protein is SH2 domain-containing protein 3C (SH2D3C).